The primary structure comprises 393 residues: uncharacterized protein (393 aa).

The segment at 345 to 393 (PNKWATDDAARREMERTRKARYRAKNRAVADPEDSPPGKRLRRGPKSST) is disordered. The segment covering 349–361 (ATDDAARREMERT) has biased composition (basic and acidic residues). A compositionally biased stretch (basic residues) spans 383-393 (KRLRRGPKSST).

This is an uncharacterized protein from Ictalurid herpesvirus 1 (strain Auburn) (IcHV-1).